The primary structure comprises 46 residues: DNA-directed RNA polymerases I, II, and III subunit rpabc4 (46 aa).

Residues Cys7, Cys10, Cys24, and Cys27 each contribute to the Zn(2+) site. Residues 7–27 (CGECGAEHEIKPKEPVKCKDC) form a C4-type zinc finger.

It belongs to the archaeal Rpo12/eukaryotic RPC10 RNA polymerase subunit family. As to quaternary structure, component of the RNA polymerase I (Pol I), RNA polymerase II (Pol II) and RNA polymerase III (Pol III) complexes consisting of at least 13, 12 and 17 subunits, respectively.

It is found in the nucleus. In terms of biological role, DNA-dependent RNA polymerase catalyzes the transcription of DNA into RNA using the four ribonucleoside triphosphates as substrates. Common component of RNA polymerases I, II and III which synthesize ribosomal RNA precursors, mRNA precursors and many functional non-coding RNAs, and a small RNAs, such as 5S rRNA and tRNAs, respectively. The sequence is that of DNA-directed RNA polymerases I, II, and III subunit rpabc4 (polr2k) from Dictyostelium discoideum (Social amoeba).